The chain runs to 469 residues: GTPase Der (469 aa).

2 consecutive EngA-type G domains span residues 3–167 and 176–349; these read PTLV…PEEE and PKIA…AAAF. GTP contacts are provided by residues 9 to 16, 56 to 60, 119 to 122, 182 to 189, 229 to 233, and 294 to 297; these read GRPNVGKS, DTGGL, NKAE, DTAGV, and NKWD. Residues 350–436 enclose the KH-like domain; sequence IKLSTPKLTR…RIQIKEDEGK (87 aa). Over residues 432–443 the composition is skewed to basic and acidic residues; sequence EDEGKNPFEGKK. The tract at residues 432 to 469 is disordered; the sequence is EDEGKNPFEGKKRAPLSESEATRMRRKKRVRRKVYGAD. Residues 455–469 are compositionally biased toward basic residues; it reads MRRKKRVRRKVYGAD.

Belongs to the TRAFAC class TrmE-Era-EngA-EngB-Septin-like GTPase superfamily. EngA (Der) GTPase family. In terms of assembly, associates with the 50S ribosomal subunit.

In terms of biological role, GTPase that plays an essential role in the late steps of ribosome biogenesis. This is GTPase Der from Thiobacillus denitrificans (strain ATCC 25259 / T1).